A 180-amino-acid polypeptide reads, in one-letter code: Geminin homolog (180 aa).

Over residues 1–27 (MSRIGLQQLNNSARNSPFGSEKATGTK) the composition is skewed to polar residues. The tract at residues 1-29 (MSRIGLQQLNNSARNSPFGSEKATGTKQI) is disordered.

The protein belongs to the geminin family. Homodimer. Interacts with cdt-1; the interaction most likely inhibits the ability of cdt-1 to load the mini-chromosome maintenance (MCM) complex onto DNA and therefore reduces DNA replication licensing activity. Interacts with nob-1 and ceh-32.

The protein resides in the cytoplasm. It localises to the nucleus. Its function is as follows. Inhibits DNA replication by binding to the DNA replication licensing factor cdt-1. Its interaction with cdt-1 prevents the cdt-1 loading of the mini-chromosome maintenance (MCM) complex onto DNA and therefore DNA replication licencing. The protein is Geminin homolog of Caenorhabditis elegans.